Consider the following 750-residue polypeptide: 5-methyltetrahydropteroyltriglutamate--homocysteine methyltransferase (750 aa).

Residues 15 to 18 (RELK) and lysine 114 each bind 5-methyltetrahydropteroyltri-L-glutamate. L-homocysteine is bound by residues 425 to 427 (IGS) and glutamate 478. L-methionine-binding positions include 425–427 (IGS) and glutamate 478. Tryptophan 555 serves as a coordination point for 5-methyltetrahydropteroyltri-L-glutamate. Aspartate 593 contacts L-homocysteine. Aspartate 593 provides a ligand contact to L-methionine. Glutamate 599 contributes to the 5-methyltetrahydropteroyltri-L-glutamate binding site. Residues histidine 636, cysteine 638, and glutamate 660 each coordinate Zn(2+). Catalysis depends on histidine 689, which acts as the Proton donor. Cysteine 721 serves as a coordination point for Zn(2+).

It belongs to the vitamin-B12 independent methionine synthase family. Zn(2+) is required as a cofactor.

It carries out the reaction 5-methyltetrahydropteroyltri-L-glutamate + L-homocysteine = tetrahydropteroyltri-L-glutamate + L-methionine. It functions in the pathway amino-acid biosynthesis; L-methionine biosynthesis via de novo pathway; L-methionine from L-homocysteine (MetE route): step 1/1. Its function is as follows. Catalyzes the transfer of a methyl group from 5-methyltetrahydrofolate to homocysteine resulting in methionine formation. The chain is 5-methyltetrahydropteroyltriglutamate--homocysteine methyltransferase from Streptococcus gordonii (strain Challis / ATCC 35105 / BCRC 15272 / CH1 / DL1 / V288).